We begin with the raw amino-acid sequence, 486 residues long: N-succinylglutamate 5-semialdehyde dehydrogenase (486 aa).

Residue 220–225 (GSSRTG) coordinates NAD(+). Active-site residues include glutamate 243 and cysteine 277.

Belongs to the aldehyde dehydrogenase family. AstD subfamily.

The catalysed reaction is N-succinyl-L-glutamate 5-semialdehyde + NAD(+) + H2O = N-succinyl-L-glutamate + NADH + 2 H(+). It functions in the pathway amino-acid degradation; L-arginine degradation via AST pathway; L-glutamate and succinate from L-arginine: step 4/5. Its function is as follows. Catalyzes the NAD-dependent reduction of succinylglutamate semialdehyde into succinylglutamate. This chain is N-succinylglutamate 5-semialdehyde dehydrogenase, found in Shewanella baltica (strain OS223).